The following is a 291-amino-acid chain: uncharacterized protein (291 aa).

Disordered regions lie at residues 29–50 (SEKP…LRDS) and 168–291 (RKVK…AELK). Position 50 is a phosphoserine (serine 50). Polar residues-rich tracts occupy residues 176 to 186 (NSKNPSKTGTP) and 205 to 217 (QKNS…SKLI). Basic and acidic residues predominate over residues 221–237 (YKDEWLQQQKAEADRRT). Over residues 280-291 (SSPSESTPAELK) the composition is skewed to polar residues.

This is an uncharacterized protein from Mus musculus (Mouse).